The sequence spans 444 residues: Phosphoglucosamine mutase (444 aa).

The active-site Phosphoserine intermediate is serine 104. Mg(2+)-binding residues include serine 104, aspartate 243, aspartate 245, and aspartate 247. Serine 104 is subject to Phosphoserine.

It belongs to the phosphohexose mutase family. Requires Mg(2+) as cofactor. Post-translationally, activated by phosphorylation.

The catalysed reaction is alpha-D-glucosamine 1-phosphate = D-glucosamine 6-phosphate. Its function is as follows. Catalyzes the conversion of glucosamine-6-phosphate to glucosamine-1-phosphate. In Neisseria meningitidis serogroup B (strain ATCC BAA-335 / MC58), this protein is Phosphoglucosamine mutase.